The chain runs to 359 residues: Mannonate dehydratase (359 aa).

It belongs to the mannonate dehydratase family. The cofactor is Fe(2+). Requires Mn(2+) as cofactor.

It carries out the reaction D-mannonate = 2-dehydro-3-deoxy-D-gluconate + H2O. Its pathway is carbohydrate metabolism; pentose and glucuronate interconversion. Catalyzes the dehydration of D-mannonate. This chain is Mannonate dehydratase, found in Moorella thermoacetica (strain ATCC 39073 / JCM 9320).